The chain runs to 435 residues: Elongation factor 1-alpha (435 aa).

Residues 4–227 (KPHLNLIVIG…YLDQLELPPK (224 aa)) form the tr-type G domain. The tract at residues 13–20 (GHIDHGKS) is G1. 13–20 (GHIDHGKS) serves as a coordination point for GTP. Ser20 serves as a coordination point for Mg(2+). Positions 69 to 73 (GVTIN) are G2. Residues 90–93 (DAPG) are G3. GTP is bound by residues 90–94 (DAPGH) and 152–155 (NKMD). The tract at residues 152-155 (NKMD) is G4. The interval 193–195 (VAP) is G5.

Belongs to the TRAFAC class translation factor GTPase superfamily. Classic translation factor GTPase family. EF-Tu/EF-1A subfamily.

The protein localises to the cytoplasm. It catalyses the reaction GTP + H2O = GDP + phosphate + H(+). Its function is as follows. GTP hydrolase that promotes the GTP-dependent binding of aminoacyl-tRNA to the A-site of ribosomes during protein biosynthesis. The sequence is that of Elongation factor 1-alpha from Saccharolobus solfataricus (strain ATCC 35092 / DSM 1617 / JCM 11322 / P2) (Sulfolobus solfataricus).